The primary structure comprises 625 residues: tRNA uridine 5-carboxymethylaminomethyl modification enzyme MnmG (625 aa).

FAD is bound by residues 11-16 (GAGHAG), valine 123, and serine 178. Residue 271–285 (GPRYCPSIETKIVTF) coordinates NAD(+). Residue glutamine 368 coordinates FAD.

This sequence belongs to the MnmG family. Homodimer. Heterotetramer of two MnmE and two MnmG subunits. Requires FAD as cofactor.

It localises to the cytoplasm. In terms of biological role, NAD-binding protein involved in the addition of a carboxymethylaminomethyl (cmnm) group at the wobble position (U34) of certain tRNAs, forming tRNA-cmnm(5)s(2)U34. The sequence is that of tRNA uridine 5-carboxymethylaminomethyl modification enzyme MnmG from Bacteroides fragilis (strain YCH46).